A 3848-amino-acid polypeptide reads, in one-letter code: Intermembrane lipid transfer protein tipC (3848 aa).

In terms of domain architecture, Chorein N-terminal spans 4-112 (HIAASVLTKY…KFQDEKQAKL (109 aa)). Disordered stretches follow at residues 243–268 (IKKE…DEIE), 450–481 (LKLQ…TGGG), 966–985 (QQLQ…SPPL), 1174–1219 (KNNQ…NNNS), 1326–1345 (ERKL…GVST), 1907–1926 (ENIN…TTTT), 2024–2047 (DDYN…NQLP), 2209–2290 (IKPA…NKNL), 2330–2353 (FNPK…SPLL), 2509–2541 (KQLN…NLLG), 3209–3228 (GITN…NNND), and 3310–3342 (INQQ…NTTQ). 2 stretches are compositionally biased toward low complexity: residues 251 to 260 (QQQQQQQQQG) and 452 to 477 (LQQQ…PSTS). Positions 1175–1190 (NNQNNNQNNNQNNNQN) are enriched in low complexity. The span at 1191–1200 (INESSPTVFI) shows a compositional bias: polar residues. The segment covering 1202–1211 (SPPPPPPPPL) has biased composition (pro residues). Positions 1333-1345 (TSPTTPSSSGVST) are enriched in low complexity. Composition is skewed to low complexity over residues 2029-2044 (DNYN…NSNN), 2217-2289 (NNNN…NNKN), and 2335-2353 (SSSS…SPLL). Composition is skewed to low complexity over residues 3212-3228 (NDPN…NNND) and 3311-3342 (NQQP…NTTQ).

The protein belongs to the VPS13 family.

The protein resides in the membrane. In terms of biological role, mediates the transfer of lipids between membranes at organelle contact sites. The chain is Intermembrane lipid transfer protein tipC (tipC) from Dictyostelium discoideum (Social amoeba).